Here is a 214-residue protein sequence, read N- to C-terminus: Ribosomal protein uL16-like (214 aa).

The protein belongs to the universal ribosomal protein uL16 family. As to quaternary structure, component of a male germ cell-specific 60S large ribosomal subunit (LSU), which contains RPL10L and RPL39L, instead of RPL10 and RPL39 paralogs. The composition of the rest of the complex is similar to classical ribosomes. As to expression, almost testis-specific. Also expressed in pre- and postmenopausal ovary.

The protein resides in the cytoplasm. Its function is as follows. Testis-specific component of the ribosome, which is required for the transition from prophase to metaphase in male meiosis I. Compensates for the inactivated X-linked RPL10 paralog during spermatogenesis. The ribosome is a large ribonucleoprotein complex responsible for the synthesis of proteins in the cell. The male germ cell-specific ribosome displays a ribosomal polypeptide exit tunnel of distinct size and charge states compared with the classical ribosome. It is responsible for regulating the biosynthesis and folding of a subset of male germ-cell-specific proteins that are essential for the formation of sperm. The chain is Ribosomal protein uL16-like from Homo sapiens (Human).